The following is a 441-amino-acid chain: 5-methylthioadenosine/S-adenosylhomocysteine deaminase (441 aa).

2 residues coordinate Zn(2+): His-70 and His-72. The substrate site is built by Glu-99 and His-191. His-218 lines the Zn(2+) pocket. Substrate-binding residues include Glu-221 and Asp-306. Residue Asp-306 coordinates Zn(2+).

Belongs to the metallo-dependent hydrolases superfamily. MTA/SAH deaminase family. Requires Zn(2+) as cofactor.

The catalysed reaction is S-adenosyl-L-homocysteine + H2O + H(+) = S-inosyl-L-homocysteine + NH4(+). It carries out the reaction S-methyl-5'-thioadenosine + H2O + H(+) = S-methyl-5'-thioinosine + NH4(+). In terms of biological role, catalyzes the deamination of 5-methylthioadenosine and S-adenosyl-L-homocysteine into 5-methylthioinosine and S-inosyl-L-homocysteine, respectively. Is also able to deaminate adenosine. In Lawsonia intracellularis (strain PHE/MN1-00), this protein is 5-methylthioadenosine/S-adenosylhomocysteine deaminase.